We begin with the raw amino-acid sequence, 513 residues long: Maturase K (513 aa).

This sequence belongs to the intron maturase 2 family. MatK subfamily.

Its subcellular location is the plastid. The protein resides in the chloroplast. Functionally, usually encoded in the trnK tRNA gene intron. Probably assists in splicing its own and other chloroplast group II introns. This is Maturase K from Byblis liniflora (Carnivorous plant).